Here is a 102-residue protein sequence, read N- to C-terminus: NADH-quinone oxidoreductase subunit K (102 aa).

A run of 3 helical transmembrane segments spans residues 5-25 (LGHYLAVAAMLFTLGILGIFL), 30-50 (IIVILMSVELILLAVNINLVA), and 62-82 (VFALLVLTVAAAEAAIGLAVL).

This sequence belongs to the complex I subunit 4L family. As to quaternary structure, NDH-1 is composed of 14 different subunits. Subunits NuoA, H, J, K, L, M, N constitute the membrane sector of the complex.

It localises to the cell inner membrane. The enzyme catalyses a quinone + NADH + 5 H(+)(in) = a quinol + NAD(+) + 4 H(+)(out). Functionally, NDH-1 shuttles electrons from NADH, via FMN and iron-sulfur (Fe-S) centers, to quinones in the respiratory chain. The immediate electron acceptor for the enzyme in this species is believed to be ubiquinone. Couples the redox reaction to proton translocation (for every two electrons transferred, four hydrogen ions are translocated across the cytoplasmic membrane), and thus conserves the redox energy in a proton gradient. The sequence is that of NADH-quinone oxidoreductase subunit K from Bradyrhizobium sp. (strain BTAi1 / ATCC BAA-1182).